The following is a 190-amino-acid chain: Riboflavin transporter FmnP (190 aa).

The Extracellular segment spans residues Met-1 to Lys-5. The chain crosses the membrane as a helical span at residues Leu-6–Phe-26. The Cytoplasmic segment spans residues Pro-27–Asp-39. The chain crosses the membrane as a helical span at residues Val-40–Ile-60. Residues Lys-61–Pro-76 are Extracellular-facing. A helical membrane pass occupies residues Val-77–Phe-97. At Lys-98–Ser-109 the chain is on the cytoplasmic side. The chain crosses the membrane as a helical span at residues Leu-110–Leu-130. Over Pro-131–Gly-154 the chain is Extracellular. The chain crosses the membrane as a helical span at residues Ile-155–Ile-175. The Cytoplasmic segment spans residues Lys-176–His-190.

This sequence belongs to the prokaryotic riboflavin transporter (P-RFT) (TC 2.A.87) family. In terms of assembly, forms a stable energy-coupling factor (ECF) transporter complex composed of a membrane-embedded substrate-binding protein (S component), 2 ATP-binding proteins (A component) and 2 transmembrane proteins (T component). May be able to interact with more than 1 S component at a time.

The protein localises to the cell membrane. Inhibited by excess of riboflavin or FMN. Also inhibited by protonophores such as CCCP and FCCP or in the absence of glucose. Mediates uptake of riboflavin and roseoflavin, a toxic riboflavin analog; may also transport FMN. Probably a riboflavin-binding protein that interacts with the energy-coupling factor (ECF) ABC-transporter complex. Unlike classic ABC transporters this ECF transporter provides the energy necessary to transport a number of different substrates. The substrates themselves are bound by transmembrane, not extracytoplasmic soluble proteins. This chain is Riboflavin transporter FmnP (fmnP), found in Bacillus subtilis (strain 168).